A 312-amino-acid polypeptide reads, in one-letter code: Pantothenate kinase (312 aa).

97–104 (GSVAVGKS) is a binding site for ATP.

It belongs to the prokaryotic pantothenate kinase family.

The protein localises to the cytoplasm. It catalyses the reaction (R)-pantothenate + ATP = (R)-4'-phosphopantothenate + ADP + H(+). It functions in the pathway cofactor biosynthesis; coenzyme A biosynthesis; CoA from (R)-pantothenate: step 1/5. This is Pantothenate kinase from Mycolicibacterium paratuberculosis (strain ATCC BAA-968 / K-10) (Mycobacterium paratuberculosis).